A 507-amino-acid polypeptide reads, in one-letter code: Lysine--tRNA ligase (507 aa).

Residues 26 to 34 (PSGPIHVGN) carry the 'HIGH' region motif. The short motif at 270–274 (AMHSS) is the 'KMSKS' region element.

The protein belongs to the class-I aminoacyl-tRNA synthetase family.

The protein localises to the cytoplasm. The enzyme catalyses tRNA(Lys) + L-lysine + ATP = L-lysyl-tRNA(Lys) + AMP + diphosphate. This chain is Lysine--tRNA ligase (lysS), found in Thermoplasma acidophilum (strain ATCC 25905 / DSM 1728 / JCM 9062 / NBRC 15155 / AMRC-C165).